Reading from the N-terminus, the 124-residue chain is Mitochondrial import inner membrane translocase subunit TIM16 (124 aa).

Residues 58 to 109 (EAQQILNISKLSPEEVQNYEHLFKVNDKSVGDSFYLQSKVVRAKERLDEELQ) are J-like. Phosphoserine is present on S69.

It belongs to the TIM16/PAM16 family. In terms of assembly, probable component of the PAM complex at least composed of a mitochondrial HSP70 protein, GRPEL1 or GRPEL2, TIMM44, TIMM16/PAM16 and TIMM14/DNAJC19. Interacts with DNAJC19. Directly interacts with DNAJC15; this interaction counteracts DNAJC15-dependent stimulation of HSPA9 ATPase activity. Associates with the TIM23 complex.

The protein resides in the mitochondrion inner membrane. Regulates ATP-dependent protein translocation into the mitochondrial matrix. Inhibits DNAJC19 stimulation of HSPA9/Mortalin ATPase activity. The chain is Mitochondrial import inner membrane translocase subunit TIM16 (Magmas-ps1) from Rattus norvegicus (Rat).